A 155-amino-acid chain; its full sequence is E3 ubiquitin-protein ligase RHA2A (155 aa).

Residues 86–128 (CVVCLSKLKEGEEVRKLECRHVFHKKCLEGWLHQFNFTCPLCR) form an RING-type; atypical zinc finger.

As to quaternary structure, interacts with NAC019 and NAC055. In terms of tissue distribution, expressed in stems, flowers, cauline leaves, rosettes, siliques, seeds and roots.

It is found in the cytoplasm. It localises to the nucleus. The enzyme catalyses S-ubiquitinyl-[E2 ubiquitin-conjugating enzyme]-L-cysteine + [acceptor protein]-L-lysine = [E2 ubiquitin-conjugating enzyme]-L-cysteine + N(6)-ubiquitinyl-[acceptor protein]-L-lysine.. It participates in protein modification; protein ubiquitination. Its function is as follows. E3 ubiquitin-protein ligase involved in the positive regulation of abscisic acid (ABA) signaling and responses to salt and osmotic stresses during seed germination and early seedling development. Acts additively with RHA2B in regulating ABA signaling and drought response. Possesses E3 ubiquitin ligase activity in vitro. This is E3 ubiquitin-protein ligase RHA2A from Arabidopsis thaliana (Mouse-ear cress).